The chain runs to 247 residues: MPRLKLLHGFHAITARLRAFPATVNEVWYDPARQDARMRAFLHLAASANARLIAADASRLNALSGEKRHQGVVARVTEATRAHSLETLLDTIEGQPLLLALDGVTDPHNLGACLRVADGAGAHAVIAPRRRAAGLTAAAAKAANGAAETVPYLTVINLARALRALKNAGIQVIGTADDATTSLFDIQLDGALALVMGAEGAGMRRLTREACDEVVRIPLAGHVQSLNVSVASGICLFEAVRQRLKRL.

S-adenosyl-L-methionine is bound by residues Gly-197, Ile-217, and Leu-226.

This sequence belongs to the class IV-like SAM-binding methyltransferase superfamily. RNA methyltransferase TrmH family. RlmB subfamily.

It is found in the cytoplasm. The catalysed reaction is guanosine(2251) in 23S rRNA + S-adenosyl-L-methionine = 2'-O-methylguanosine(2251) in 23S rRNA + S-adenosyl-L-homocysteine + H(+). In terms of biological role, specifically methylates the ribose of guanosine 2251 in 23S rRNA. The protein is 23S rRNA (guanosine-2'-O-)-methyltransferase RlmB of Burkholderia sp.